The following is a 200-amino-acid chain: Large ribosomal subunit protein uL4 (200 aa).

Residues 38 to 68 form a disordered region; that stretch reads GRQGSKQQKTRSDVRGGGKRPWRQKGTGRAR. The span at 54–65 shows a compositional bias: basic residues; that stretch reads GGKRPWRQKGTG.

Belongs to the universal ribosomal protein uL4 family. In terms of assembly, part of the 50S ribosomal subunit.

One of the primary rRNA binding proteins, this protein initially binds near the 5'-end of the 23S rRNA. It is important during the early stages of 50S assembly. It makes multiple contacts with different domains of the 23S rRNA in the assembled 50S subunit and ribosome. Its function is as follows. Forms part of the polypeptide exit tunnel. The chain is Large ribosomal subunit protein uL4 from Pseudomonas syringae pv. tomato (strain ATCC BAA-871 / DC3000).